The chain runs to 150 residues: 3-hydroxyacyl-[acyl-carrier-protein] dehydratase FabZ (150 aa).

Histidine 54 is a catalytic residue.

The protein belongs to the thioester dehydratase family. FabZ subfamily.

It localises to the cytoplasm. It carries out the reaction a (3R)-hydroxyacyl-[ACP] = a (2E)-enoyl-[ACP] + H2O. Its function is as follows. Involved in unsaturated fatty acids biosynthesis. Catalyzes the dehydration of short chain beta-hydroxyacyl-ACPs and long chain saturated and unsaturated beta-hydroxyacyl-ACPs. The chain is 3-hydroxyacyl-[acyl-carrier-protein] dehydratase FabZ from Chromobacterium violaceum (strain ATCC 12472 / DSM 30191 / JCM 1249 / CCUG 213 / NBRC 12614 / NCIMB 9131 / NCTC 9757 / MK).